Consider the following 2944-residue polypeptide: Collagen alpha-1(VII) chain (2944 aa).

An N-terminal signal peptide occupies residues 1–16 (MTLRLLVAALCAGILA). The nonhelical region (NC1) stretch occupies residues 17–1253 (EAPRVRAQHR…PEPCPVYCPK (1237 aa)). The VWFA 1 domain occupies 38–211 (DIVFLLDGSS…SILRTLLPLV (174 aa)). Fibronectin type-III domains lie at 234–329 (APRD…TALE), 330–416 (GPEL…TDAS), 417–507 (VEQT…PELP), 510–597 (PVTD…EPET), 600–687 (AVPG…DPLG), 688–775 (PVRT…APEP), 778–866 (RVSR…PPEA), 869–957 (ALGT…SPRV), and 958–1051 (PSIE…CPRG). Residue Asn337 is glycosylated (N-linked (GlcNAc...) asparagine). The interval 632–651 (STGSGPESSQTLPPDSTATD) is disordered. Asn786 is a glycosylation site (N-linked (GlcNAc...) asparagine). In terms of domain architecture, VWFA 2 spans 1054–1229 (DVVFLPHATQ…PSLDQAVSGL (176 aa)). Asn1109 carries N-linked (GlcNAc...) asparagine glycosylation. 2 consecutive short sequence motifs (cell attachment site) follow at residues 1170-1172 (RGD) and 1334-1336 (RGD). 3 disordered regions span residues 1239–1941 (TTQP…SVPN), 1963–2782 (WDES…EKGE), and 2837–2872 (SHAE…PWDS). Positions 1254-1477 (GQKGEPGEMG…GPRGPPGAIG (224 aa)) are interrupted collagenous region. The tract at residues 1254–2784 (GQKGEPGEMG…GPRGEKGEAA (1531 aa)) is triple-helical region. A compositionally biased stretch (basic and acidic residues) spans 1336 to 1346 (DPGERGPRGPK). Residues 1355-1365 (VIGGEGPGLPG) are compositionally biased toward gly residues. Residues 1399 to 1408 (KGDKGDRGER) show a composition bias toward basic and acidic residues. The segment covering 1429-1440 (PGSPGPQGPVGP) has biased composition (pro residues). Positions 1574-1583 (RGPPGLVLPG) are enriched in low complexity. Composition is skewed to basic and acidic residues over residues 1630–1642 (RGRD…KGDE), 1669–1683 (VGEK…EDGR), and 1715–1733 (AREK…RGPK). Residues 1786 to 1802 (KPGAAGPSGPNGAAGKA) are compositionally biased toward low complexity. Residues 1852-1877 (EDGRKGEKGDSGASGREGRDGPKGER) show a composition bias toward basic and acidic residues. Over residues 1886–1897 (QGPPGLPGPVGP) the composition is skewed to pro residues. Gly residues predominate over residues 1898–1911 (PGQGFPGVPGGTGP). A compositionally biased stretch (basic and acidic residues) spans 1974 to 1984 (PERRRGPKGDS). Residues 2008–2010 (RGD) carry the Cell attachment site motif. 4-hydroxyproline occurs at positions 2036 and 2039. Over residues 2046-2055 (GRAGGVGEAG) the composition is skewed to gly residues. Over residues 2056–2074 (RPGERGERGEKGERGEQGR) the composition is skewed to basic and acidic residues. A compositionally biased stretch (pro residues) spans 2078-2092 (PGLPGTPGPPGPPGP). Residues Pro2084, Pro2087, and Pro2090 each carry the 4-hydroxyproline modification. Over residues 2127–2143 (PKGDRGVPGIKGDRGEP) the composition is skewed to basic and acidic residues. 4-hydroxyproline occurs at positions 2167, 2176, 2185, and 2188. Composition is skewed to low complexity over residues 2191 to 2206 (PGLA…SGLK) and 2235 to 2250 (SGLV…PGQV). Over residues 2328–2346 (AKGDRGLPGPRGEKGEAGR) the composition is skewed to basic and acidic residues. Over residues 2387-2406 (VKGDLGLPGLPGAPGVVGFP) the composition is skewed to low complexity. The span at 2438-2448 (PLGPPGPPGSV) shows a compositional bias: pro residues. 2 stretches are compositionally biased toward basic and acidic residues: residues 2471-2486 (RGER…DGRP) and 2534-2570 (AKGD…EPGD). The Cell attachment site motif lies at 2553–2555 (RGD). The segment covering 2573-2601 (SAGLPGLRGLLGPQGQPGAAGIPGDPGSP) has biased composition (low complexity). 5-hydroxylysine; alternate is present on residues Lys2625 and Lys2631. Lys2625 and Lys2631 each carry an O-linked (Gal...) hydroxylysine; alternate glycan. A 4-hydroxyproline mark is found at Pro2664, Pro2667, and Pro2673. Gly residues predominate over residues 2704–2713 (GTPGIGGFPG). Over residues 2749–2762 (GERVVGAPGVPGAP) the composition is skewed to low complexity. Residues 2785-2944 (LTEDDIRGFV…QSQGTGTAQD (160 aa)) form a nonhelical region (NC2) region. The span at 2837 to 2847 (SHAEEEERVPP) shows a compositional bias: basic and acidic residues. Residues 2848-2872 (EDDEYSEYSEYSVEEYQDPEAPWDS) are compositionally biased toward acidic residues. Positions 2872–2944 (SDDPCSLPLD…QSQGTGTAQD (73 aa)) constitute a BPTI/Kunitz inhibitor domain. Cystine bridges form between Cys2876–Cys2929, Cys2885–Cys2912, and Cys2904–Cys2925.

In terms of assembly, homotrimer. Interacts with MIA3/TANGO1; facilitating its loading into transport carriers and subsequent secretion. In terms of processing, prolines at the third position of the tripeptide repeating unit (G-X-Y) are hydroxylated in some or all of the chains.

It localises to the secreted. Its subcellular location is the extracellular space. The protein resides in the extracellular matrix. It is found in the basement membrane. Stratified squamous epithelial basement membrane protein that forms anchoring fibrils which may contribute to epithelial basement membrane organization and adherence by interacting with extracellular matrix (ECM) proteins such as type IV collagen. This Homo sapiens (Human) protein is Collagen alpha-1(VII) chain (COL7A1).